Here is a 272-residue protein sequence, read N- to C-terminus: Dermonecrotic toxin LvSicTox-alphaIC1biv (272 aa).

Residue histidine 5 is part of the active site. 2 residues coordinate Mg(2+): glutamate 25 and aspartate 27. Histidine 41 serves as the catalytic Nucleophile. Disulfide bonds link cysteine 45-cysteine 51 and cysteine 47-cysteine 189. Aspartate 84 lines the Mg(2+) pocket.

The protein belongs to the arthropod phospholipase D family. Class II subfamily. Requires Mg(2+) as cofactor. As to expression, expressed by the venom gland.

Its subcellular location is the secreted. It carries out the reaction an N-(acyl)-sphingosylphosphocholine = an N-(acyl)-sphingosyl-1,3-cyclic phosphate + choline. The catalysed reaction is an N-(acyl)-sphingosylphosphoethanolamine = an N-(acyl)-sphingosyl-1,3-cyclic phosphate + ethanolamine. It catalyses the reaction a 1-acyl-sn-glycero-3-phosphocholine = a 1-acyl-sn-glycero-2,3-cyclic phosphate + choline. The enzyme catalyses a 1-acyl-sn-glycero-3-phosphoethanolamine = a 1-acyl-sn-glycero-2,3-cyclic phosphate + ethanolamine. Functionally, dermonecrotic toxins cleave the phosphodiester linkage between the phosphate and headgroup of certain phospholipids (sphingolipid and lysolipid substrates), forming an alcohol (often choline) and a cyclic phosphate. This toxin acts on sphingomyelin (SM). It may also act on ceramide phosphoethanolamine (CPE), lysophosphatidylcholine (LPC) and lysophosphatidylethanolamine (LPE), but not on lysophosphatidylserine (LPS), and lysophosphatidylglycerol (LPG). It acts by transphosphatidylation, releasing exclusively cyclic phosphate products as second products. Induces dermonecrosis, hemolysis, increased vascular permeability, edema, inflammatory response, and platelet aggregation. The protein is Dermonecrotic toxin LvSicTox-alphaIC1biv of Loxosceles variegata (Recluse spider).